The sequence spans 311 residues: Glutaminase (311 aa).

Positions 66, 116, 162, 169, 193, 245, and 263 each coordinate substrate.

Belongs to the glutaminase family. In terms of assembly, homotetramer.

It catalyses the reaction L-glutamine + H2O = L-glutamate + NH4(+). In Rhodopseudomonas palustris (strain BisB5), this protein is Glutaminase.